The sequence spans 1420 residues: DNA-directed RNA polymerase subunit beta' (1420 aa).

Positions 72, 74, 87, and 90 each coordinate Zn(2+). 3 residues coordinate Mg(2+): D462, D464, and D466. 4 residues coordinate Zn(2+): C816, C896, C903, and C906.

This sequence belongs to the RNA polymerase beta' chain family. The RNAP catalytic core consists of 2 alpha, 1 beta, 1 beta' and 1 omega subunit. When a sigma factor is associated with the core the holoenzyme is formed, which can initiate transcription. Mg(2+) is required as a cofactor. Requires Zn(2+) as cofactor.

It catalyses the reaction RNA(n) + a ribonucleoside 5'-triphosphate = RNA(n+1) + diphosphate. Its function is as follows. DNA-dependent RNA polymerase catalyzes the transcription of DNA into RNA using the four ribonucleoside triphosphates as substrates. This Blochmanniella floridana protein is DNA-directed RNA polymerase subunit beta'.